A 281-amino-acid polypeptide reads, in one-letter code: Bifunctional protein FolD (281 aa).

Residues 161 to 163 (GRS), serine 186, and isoleucine 227 each bind NADP(+).

This sequence belongs to the tetrahydrofolate dehydrogenase/cyclohydrolase family. Homodimer.

The enzyme catalyses (6R)-5,10-methylene-5,6,7,8-tetrahydrofolate + NADP(+) = (6R)-5,10-methenyltetrahydrofolate + NADPH. The catalysed reaction is (6R)-5,10-methenyltetrahydrofolate + H2O = (6R)-10-formyltetrahydrofolate + H(+). It participates in one-carbon metabolism; tetrahydrofolate interconversion. In terms of biological role, catalyzes the oxidation of 5,10-methylenetetrahydrofolate to 5,10-methenyltetrahydrofolate and then the hydrolysis of 5,10-methenyltetrahydrofolate to 10-formyltetrahydrofolate. This is Bifunctional protein FolD from Brachyspira hyodysenteriae (strain ATCC 49526 / WA1).